A 339-amino-acid chain; its full sequence is UDP-N-acetylglucosamine--N-acetylmuramyl-(pentapeptide) pyrophosphoryl-undecaprenol N-acetylglucosamine transferase (339 aa).

Residues 11–13 (TGG), asparagine 127, arginine 170, serine 188, isoleucine 235, and glutamine 280 contribute to the UDP-N-acetyl-alpha-D-glucosamine site.

This sequence belongs to the glycosyltransferase 28 family. MurG subfamily.

It localises to the cell inner membrane. The catalysed reaction is di-trans,octa-cis-undecaprenyl diphospho-N-acetyl-alpha-D-muramoyl-L-alanyl-D-glutamyl-meso-2,6-diaminopimeloyl-D-alanyl-D-alanine + UDP-N-acetyl-alpha-D-glucosamine = di-trans,octa-cis-undecaprenyl diphospho-[N-acetyl-alpha-D-glucosaminyl-(1-&gt;4)]-N-acetyl-alpha-D-muramoyl-L-alanyl-D-glutamyl-meso-2,6-diaminopimeloyl-D-alanyl-D-alanine + UDP + H(+). The protein operates within cell wall biogenesis; peptidoglycan biosynthesis. Its function is as follows. Cell wall formation. Catalyzes the transfer of a GlcNAc subunit on undecaprenyl-pyrophosphoryl-MurNAc-pentapeptide (lipid intermediate I) to form undecaprenyl-pyrophosphoryl-MurNAc-(pentapeptide)GlcNAc (lipid intermediate II). This is UDP-N-acetylglucosamine--N-acetylmuramyl-(pentapeptide) pyrophosphoryl-undecaprenol N-acetylglucosamine transferase from Thermotoga maritima (strain ATCC 43589 / DSM 3109 / JCM 10099 / NBRC 100826 / MSB8).